The following is a 463-amino-acid chain: Succinate--CoA ligase [ADP-forming] subunit beta, mitochondrial (463 aa).

A mitochondrion-targeting transit peptide spans 1-53 (MAASVFYGRLLAVATLRNHRPRTALGAAAQVLGSSGLFNNHGLQVQQQQQRNL). The ATP-grasp domain maps to 61–288 (MELLQEAGVS…SNSAYRQKKI (228 aa)). At Lys-78 the chain carries N6-acetyllysine. Tyr-84 carries the post-translational modification Phosphotyrosine. Lys-88 bears the N6-acetyllysine; alternate mark. Lys-88 bears the N6-succinyllysine; alternate mark. ATP contacts are provided by residues Lys-98 and 105-107 (GRG). N6-acetyllysine is present on residues Lys-129, Lys-139, Lys-143, and Lys-216. 2 residues coordinate Mg(2+): Asn-258 and Asp-272. Ser-279 carries the post-translational modification Phosphoserine. Asn-323 contributes to the substrate binding site. Position 341 is a phosphothreonine (Thr-341). Lys-368 is modified (N6-acetyllysine). 380–382 (GIM) contributes to the substrate binding site.

Belongs to the succinate/malate CoA ligase beta subunit family. ATP-specific subunit beta subfamily. As to quaternary structure, heterodimer of an alpha and a beta subunit. The beta subunit determines specificity for ATP. Interacts with ALAS2. The cofactor is Mg(2+).

The protein resides in the mitochondrion. It carries out the reaction succinate + ATP + CoA = succinyl-CoA + ADP + phosphate. The protein operates within carbohydrate metabolism; tricarboxylic acid cycle; succinate from succinyl-CoA (ligase route): step 1/1. In terms of biological role, ATP-specific succinyl-CoA synthetase functions in the citric acid cycle (TCA), coupling the hydrolysis of succinyl-CoA to the synthesis of ATP and thus represents the only step of substrate-level phosphorylation in the TCA. The beta subunit provides nucleotide specificity of the enzyme and binds the substrate succinate, while the binding sites for coenzyme A and phosphate are found in the alpha subunit. In Macaca fascicularis (Crab-eating macaque), this protein is Succinate--CoA ligase [ADP-forming] subunit beta, mitochondrial.